Reading from the N-terminus, the 323-residue chain is Methionyl-tRNA formyltransferase (323 aa).

Residue 115 to 118 (SLLP) participates in (6S)-5,6,7,8-tetrahydrofolate binding.

It belongs to the Fmt family.

It carries out the reaction L-methionyl-tRNA(fMet) + (6R)-10-formyltetrahydrofolate = N-formyl-L-methionyl-tRNA(fMet) + (6S)-5,6,7,8-tetrahydrofolate + H(+). In terms of biological role, attaches a formyl group to the free amino group of methionyl-tRNA(fMet). The formyl group appears to play a dual role in the initiator identity of N-formylmethionyl-tRNA by promoting its recognition by IF2 and preventing the misappropriation of this tRNA by the elongation apparatus. This is Methionyl-tRNA formyltransferase from Lactococcus lactis subsp. cremoris (strain MG1363).